A 555-amino-acid polypeptide reads, in one-letter code: Protein peste (555 aa).

The Cytoplasmic portion of the chain corresponds to 1–7 (MTSRTRH). The helical transmembrane segment at 8–28 (CARLGIVLLGICCIASGIYLF) threads the bilayer. Over 29–434 (RNWIDMFTRM…VRVSEEIAAD (406 aa)) the chain is Extracellular. N-linked (GlcNAc...) asparagine glycosylation is found at asparagine 70, asparagine 110, asparagine 129, asparagine 213, asparagine 242, asparagine 312, and asparagine 342. The helical transmembrane segment at 435 to 455 (IALVPLIVLLGQIVTGILLAG) threads the bilayer. Residues 456–555 (GLICTCWYPT…SEDSPDVVVR (100 aa)) lie on the Cytoplasmic side of the membrane.

Belongs to the CD36 family.

It localises to the cell membrane. (Microbial infection) Plays a role in mycobacterial infection. Mediates infection by M.fortuitum and uptake of M.smegmatis. This is Protein peste from Drosophila melanogaster (Fruit fly).